A 143-amino-acid chain; its full sequence is Hemoglobin subunit alpha (143 aa).

Serine 2 carries the N-acetylserine modification. Residues 2 to 143 form the Globin domain; the sequence is SLSDKDKSAV…VALALAEKYR (142 aa). An O2-binding site is contributed by histidine 60. Histidine 89 contributes to the heme b binding site.

It belongs to the globin family. Heterotetramer of two alpha chains and two beta chains. Red blood cells.

Its function is as follows. Involved in oxygen transport from gills to the various peripheral tissues. The chain is Hemoglobin subunit alpha (hba) from Pogonophryne scotti (Saddleback plunderfish).